Reading from the N-terminus, the 367-residue chain is Chorismate synthase (367 aa).

NADP(+) contacts are provided by Arg48 and Arg54. FMN-binding positions include 125-127, 238-239, Gly278, 293-297, and Arg319; these read RSS, NA, and KPTSS.

Belongs to the chorismate synthase family. In terms of assembly, homotetramer. The cofactor is FMNH2.

The catalysed reaction is 5-O-(1-carboxyvinyl)-3-phosphoshikimate = chorismate + phosphate. It functions in the pathway metabolic intermediate biosynthesis; chorismate biosynthesis; chorismate from D-erythrose 4-phosphate and phosphoenolpyruvate: step 7/7. Its function is as follows. Catalyzes the anti-1,4-elimination of the C-3 phosphate and the C-6 proR hydrogen from 5-enolpyruvylshikimate-3-phosphate (EPSP) to yield chorismate, which is the branch point compound that serves as the starting substrate for the three terminal pathways of aromatic amino acid biosynthesis. This reaction introduces a second double bond into the aromatic ring system. The polypeptide is Chorismate synthase (Xanthomonas campestris pv. campestris (strain B100)).